Here is an 819-residue protein sequence, read N- to C-terminus: Hypoxia-inducible factor 1-alpha (819 aa).

A disordered region spans residues Met1–Arg31. Residues Met1 to Ala402 form an interaction with TSGA10 region. Positions Gly7–Arg31 are enriched in basic and acidic residues. Residues Arg18–Arg71 enclose the bHLH domain. The interval Lys22–Arg31 is DNA-binding. Residues Lys86–Gly159 form the PAS 1 domain. Residues Arg171 to Val192 are required for heterodimer formation with ARNT. The region spanning Pro229–Gly299 is the PAS 2 domain. Position 248 is a phosphoserine; by CK1 (Ser248). Positions Thr303–Ile346 constitute a PAC domain. An ODD region spans residues Ala402 to Gln599. Pro403 carries the post-translational modification 4-hydroxyproline. The segment covering Ile495 to Ser518 has biased composition (polar residues). A disordered region spans residues Ile495–Cys521. Positions Phe532 to Arg576 are NTAD. N6-acetyllysine; alternate is present on Lys533. Lys533 is covalently cross-linked (Glycyl lysine isopeptide (Lys-Gly) (interchain with G-Cter in ubiquitin); alternate). Residues Lys539 and Lys548 each participate in a glycyl lysine isopeptide (Lys-Gly) (interchain with G-Cter in ubiquitin) cross-link. Residue Ser552 is modified to Phosphoserine; by GSK3-beta. A Phosphothreonine; by GSK3-beta modification is found at Thr556. Residue Pro565 is modified to 4-hydroxyproline. Phosphoserine; by PLK3 is present on Ser577. The interval Ser577–Gln778 is ID. Residues Leu581–Ser685 are disordered. A compositionally biased stretch (low complexity) spans Ser582–Thr613. Basic and acidic residues predominate over residues Glu614–Lys628. The segment covering Thr632–Thr655 has biased composition (low complexity). The residue at position 650 (Ser650) is a Phosphoserine; by PLK3. Lys702 is modified (N6-acetyllysine). The Nuclear localization signal motif lies at Arg711 to His717. The interval Ser779–Asn819 is CTAD. An S-nitrosocysteine modification is found at Cys793. (3S)-3-hydroxyasparagine is present on Asn796.

In terms of assembly, interacts with the ARNT; forms a heterodimer that binds core DNA sequence 5'-TACGTG-3' within the hypoxia response element (HRE) of target gene promoters. Interacts with COPS5; the interaction increases the transcriptional activity of HIF1A through increased stability. Interacts with EP300 (via TAZ-type 1 domains); the interaction is stimulated in response to hypoxia and inhibited by CITED2. Interacts with CREBBP (via TAZ-type 1 domains). Interacts with NCOA1, NCOA2, APEX1 and HSP90. Interacts (hydroxylated within the ODD domain) with VHLL (via beta domain); the interaction, leads to polyubiquitination and subsequent HIF1A proteasomal degradation. During hypoxia, sumoylated HIF1A also binds VHL; the interaction promotes the ubiquitination of HIF1A. Interacts with SENP1; the interaction desumoylates HIF1A resulting in stabilization and activation of transcription. Interacts (via the ODD domain) with NAA10; the interaction appears not to acetylate HIF1A nor have any affect on protein stability, during hypoxia. Interacts with RWDD3; the interaction enhances HIF1A sumoylation. Interacts with TSGA10. Interacts with HIF3A. Interacts with RORA (via the DNA binding domain); the interaction enhances HIF1A transcription under hypoxia through increasing protein stability. Interaction with PSMA7 inhibits the transactivation activity of HIF1A under both normoxic and hypoxia-mimicking conditions. Interacts with USP20. Interacts with RACK1; promotes HIF1A ubiquitination and proteasome-mediated degradation. Interacts (via N-terminus) with USP19. Interacts with SIRT2. Interacts (deacetylated form) with EGLN1. Interacts with CBFA2T3. Interacts with HSP90AA1 and HSP90AB1. Interacts with DCUN1D1; this interaction increases the interaction between VHL and DCUN1D1. Interacts with HIF1AN. In terms of processing, S-nitrosylation of Cys-793 may be responsible for increased recruitment of p300 coactivator necessary for transcriptional activity of HIF-1 complex. Acetylation of Lys-533 by ARD1 increases interaction with VHL and stimulates subsequent proteasomal degradation. Deacetylation of Lys-702 by SIRT2 increases its interaction with and hydroxylation by EGLN1 thereby inactivating HIF1A activity by inducing its proteasomal degradation. Post-translationally, requires phosphorylation for DNA-binding. Phosphorylation at Ser-248 by CSNK1D/CK1 represses kinase activity and impairs ARNT binding. Phosphorylation by GSK3-beta and PLK3 promote degradation by the proteasome. In terms of processing, the iron and 2-oxoglutarate dependent 3-hydroxylation of asparagine is (S) stereospecific within HIF CTAD domains. Sumoylated; with SUMO1 under hypoxia. Sumoylation is enhanced through interaction with RWDD3. Both sumoylation and desumoylation seem to be involved in the regulation of its stability during hypoxia. Sumoylation can promote either its stabilization or its VHL-dependent degradation by promoting hydroxyproline-independent HIF1A-VHL complex binding, thus leading to HIF1A ubiquitination and proteasomal degradation. Desumoylation by SENP1 increases its stability amd transcriptional activity. There is a disaccord between various publications on the effect of sumoylation and desumoylation on its stability and transcriptional activity. Post-translationally, in normoxia, is hydroxylated on Pro-403 and Pro-565 in the oxygen-dependent degradation domain (ODD) by EGLN1/PHD2 and EGLN2/PHD1. EGLN3/PHD3 has also been shown to hydroxylate Pro-565. The hydroxylated prolines promote interaction with VHL, initiating rapid ubiquitination and subsequent proteasomal degradation. Deubiquitinated by USP20. Under hypoxia, proline hydroxylation is impaired and ubiquitination is attenuated, resulting in stabilization. In normoxia, is hydroxylated on Asn-796 by HIF1AN, thus abrogating interaction with CREBBP and EP300 and preventing transcriptional activation. Repressed by iron ion, via Fe(2+) prolyl hydroxylase (PHD) enzymes-mediated hydroxylation and subsequent proteasomal degradation.

It is found in the cytoplasm. Its subcellular location is the nucleus. The protein resides in the nucleus speckle. Its activity is regulated as follows. Induced by reactive oxygen species (ROS). Its function is as follows. Functions as a master transcriptional regulator of the adaptive response to hypoxia. Under hypoxic conditions, activates the transcription of over 40 genes, including erythropoietin, glucose transporters, glycolytic enzymes, vascular endothelial growth factor, HILPDA, and other genes whose protein products increase oxygen delivery or facilitate metabolic adaptation to hypoxia. Plays an essential role in embryonic vascularization, tumor angiogenesis and pathophysiology of ischemic disease. Heterodimerizes with ARNT; heterodimer binds to core DNA sequence 5'-TACGTG-3' within the hypoxia response element (HRE) of target gene promoters. Activation requires recruitment of transcriptional coactivators such as CREBBP and EP300. Activity is enhanced by interaction with NCOA1 and/or NCOA2. Interaction with redox regulatory protein APEX1 seems to activate CTAD and potentiates activation by NCOA1 and CREBBP. Involved in the axonal distribution and transport of mitochondria in neurons during hypoxia. The protein is Hypoxia-inducible factor 1-alpha (HIF1A) of Eospalax fontanierii baileyi (Plateau zokor).